A 902-amino-acid polypeptide reads, in one-letter code: Respiratory nitrate reductase alpha chain (902 aa).

[4Fe-4S] cluster is bound by residues histidine 29, cysteine 33, and cysteine 37.

This sequence belongs to the prokaryotic molybdopterin-containing oxidoreductase family. In terms of assembly, heterotrimer composed of an alpha, a beta and a gamma chain. Alpha and beta are catalytic chains; gamma chains are involved in binding the enzyme complex to the cytoplasmic membrane. [4Fe-4S] cluster is required as a cofactor. It depends on Mo-bis(molybdopterin guanine dinucleotide) as a cofactor.

It localises to the cell membrane. It is found in the cytoplasm. It catalyses the reaction nitrate + a quinol = a quinone + nitrite + H2O. With respect to regulation, inhibited by micromolar concentrations of azide. The nitrate reductase enzyme complex allows Bradyrhizobium sp. USDA 3045 to use nitrate as an electron acceptor during anaerobic growth. The alpha chain is the actual site of nitrate reduction. This is Respiratory nitrate reductase alpha chain (narG) from Bradyrhizobium sp.